A 120-amino-acid polypeptide reads, in one-letter code: uncharacterized protein (120 aa).

2 helical membrane-spanning segments follow: residues 26 to 46 (PSTS…PAGM) and 57 to 77 (LLFA…LTLV).

It is found in the membrane. This is an uncharacterized protein from Saccharomyces cerevisiae (strain ATCC 204508 / S288c) (Baker's yeast).